The following is a 315-amino-acid chain: Cytochrome f (315 aa).

A signal peptide spans 1 to 36; sequence MKQSLLSVLTKKSLRLLAALFLVVTSVFSLPQAAQA. 4 residues coordinate heme: phenylalanine 37, cysteine 57, cysteine 60, and histidine 61. The helical transmembrane segment at 281 to 301 threads the bilayer; sequence IKWLMVFFSAIMISQTLLVLK.

Belongs to the cytochrome f family. As to quaternary structure, the 4 large subunits of the cytochrome b6-f complex are cytochrome b6, subunit IV (17 kDa polypeptide, PetD), cytochrome f and the Rieske protein, while the 4 small subunits are PetG, PetL, PetM and PetN. The complex functions as a dimer. Heme serves as cofactor.

It localises to the cellular thylakoid membrane. Functionally, component of the cytochrome b6-f complex, which mediates electron transfer between photosystem II (PSII) and photosystem I (PSI), cyclic electron flow around PSI, and state transitions. The chain is Cytochrome f from Acaryochloris marina (strain MBIC 11017).